The sequence spans 479 residues: UDP-N-acetylmuramoyl-L-alanyl-D-glutamate--2,6-diaminopimelate ligase (479 aa).

S21 serves as a coordination point for UDP-N-acetyl-alpha-D-muramoyl-L-alanyl-D-glutamate. 98 to 104 contributes to the ATP binding site; sequence GTNGKSS. Residues 144–145, S171, Q177, and R179 contribute to the UDP-N-acetyl-alpha-D-muramoyl-L-alanyl-D-glutamate site; that span reads TT. K211 carries the post-translational modification N6-carboxylysine. Meso-2,6-diaminopimelate is bound by residues R372, 396–399, G446, and E450; that span reads DNPR. Residues 396-399 carry the Meso-diaminopimelate recognition motif motif; it reads DNPR.

This sequence belongs to the MurCDEF family. MurE subfamily. Mg(2+) serves as cofactor. In terms of processing, carboxylation is probably crucial for Mg(2+) binding and, consequently, for the gamma-phosphate positioning of ATP.

Its subcellular location is the cytoplasm. The enzyme catalyses UDP-N-acetyl-alpha-D-muramoyl-L-alanyl-D-glutamate + meso-2,6-diaminopimelate + ATP = UDP-N-acetyl-alpha-D-muramoyl-L-alanyl-gamma-D-glutamyl-meso-2,6-diaminopimelate + ADP + phosphate + H(+). It functions in the pathway cell wall biogenesis; peptidoglycan biosynthesis. In terms of biological role, catalyzes the addition of meso-diaminopimelic acid to the nucleotide precursor UDP-N-acetylmuramoyl-L-alanyl-D-glutamate (UMAG) in the biosynthesis of bacterial cell-wall peptidoglycan. The chain is UDP-N-acetylmuramoyl-L-alanyl-D-glutamate--2,6-diaminopimelate ligase from Rickettsia montanensis.